A 438-amino-acid polypeptide reads, in one-letter code: Beta-1,3-galactosyl-O-glycosyl-glycoprotein beta-1,6-N-acetylglucosaminyltransferase 3 (438 aa).

Topologically, residues 1 to 6 are cytoplasmic; sequence MVQWKR. A helical; Signal-anchor for type II membrane protein membrane pass occupies residues 7–26; it reads LCQLHYLWALGCYMLLATVA. Residues 27 to 438 are Lumenal-facing; that stretch reads LKLSFRLKCD…RYKAIYGTEL (412 aa). 4 disulfide bridges follow: cysteine 70–cysteine 227, cysteine 161–cysteine 382, cysteine 182–cysteine 209, and cysteine 391–cysteine 423. Asparagine 289 is a glycosylation site (N-linked (GlcNAc...) asparagine).

This sequence belongs to the glycosyltransferase 14 family. In terms of processing, N-glycosylated. As to expression, primarily expressed in mucus-secreting tissues. Expressed in colon, kidney, small intestine, trachea, and stomach, where mucin is produced.

It localises to the golgi apparatus membrane. It catalyses the reaction a 3-O-[beta-D-galactosyl-(1-&gt;3)-N-acetyl-alpha-D-galactosaminyl]-L-seryl-[protein] + UDP-N-acetyl-alpha-D-glucosamine = 3-O-{beta-D-galactosyl-(1-&gt;3)-[N-acetyl-beta-D-glucosaminyl-(1-&gt;6)]-N-acetyl-alpha-D-galactosaminyl}-L-seryl-[protein] + UDP + H(+). It carries out the reaction a 3-O-[beta-D-galactosyl-(1-&gt;3)-N-acetyl-alpha-D-galactosaminyl]-L-threonyl-[protein] + UDP-N-acetyl-alpha-D-glucosamine = a 3-O-{beta-D-galactosyl-(1-&gt;3)-[N-acetyl-beta-D-glucosaminyl-(1-&gt;6)]-N-acetyl-alpha-D-galactosaminyl}-L-threonyl-[protein] + UDP + H(+). The catalysed reaction is a beta-D-Gal-(1-&gt;4)-beta-D-GlcNAc-(1-&gt;3)-beta-D-Gal-(1-&gt;4)-beta-D-GlcNAc derivative + UDP-N-acetyl-alpha-D-glucosamine = a beta-D-Gal-(1-&gt;4)-beta-D-GlcNAc-(1-&gt;3)-[beta-D-GlcNAc-(1-&gt;6)]-beta-D-Gal-(1-&gt;4)-N-acetyl-beta-D-glucosaminyl derivative + UDP + H(+). The enzyme catalyses 3-O-[N-acetyl-beta-D-glucosaminyl-(1-&gt;3)-N-acetyl-alpha-D-galactosaminyl]-L-seryl-[protein] + UDP-N-acetyl-alpha-D-glucosamine = 3-O-[N-acetyl-beta-D-glucosaminyl-(1-&gt;3)-[N-acetyl-beta-D-glucosaminyl-(1-&gt;6)]-N-acetyl-alpha-D-galactosaminyl]-L-seryl-[protein] + UDP + H(+). It catalyses the reaction a 3-O-[N-acetyl-beta-D-glucosaminyl-(1-&gt;3)-N-acetyl-alpha-D-galactosaminyl]-L-threonyl-[protein] + UDP-N-acetyl-alpha-D-glucosamine = 3-O-[N-acetyl-beta-D-glucosaminyl-(1-&gt;3)-[N-acetyl-beta-D-glucosaminyl-(1-&gt;6)]-N-acetyl-alpha-D-galactosaminyl]-L-threonyl-[protein] + UDP + H(+). Its pathway is protein modification; protein glycosylation. Glycosyltransferase that can synthesize all known mucin beta 6 N-acetylglucosaminides. Mediates core 2 and core 4 O-glycan branching, 2 important steps in mucin-type biosynthesis. Also has I-branching enzyme activity by converting linear into branched poly-N-acetyllactosaminoglycans, leading to introduce the blood group I antigen during embryonic development. The chain is Beta-1,3-galactosyl-O-glycosyl-glycoprotein beta-1,6-N-acetylglucosaminyltransferase 3 (GCNT3) from Homo sapiens (Human).